The primary structure comprises 626 residues: Serine/threonine-protein kinase PknH (626 aa).

Residues 1–403 lie on the Cytoplasmic side of the membrane; the sequence is MSDAQDSRVG…QTPRKTNPWP (403 aa). Residues 16-276 enclose the Protein kinase domain; sequence YHLKRLLGRG…DLALAAHEAL (261 aa). ATP-binding positions include 22-30 and K45; that span reads LGRGGMGEV. Catalysis depends on D139, which acts as the Proton acceptor. Position 170 is a phosphothreonine (T170). Positions 292–396 are disordered; it reads QESTLPAPPK…GGPSPWAQTP (105 aa). 2 stretches are compositionally biased toward pro residues: residues 297–308 and 316–342; these read PAPPKPVPPPTM and RQPP…PAQP. The segment covering 343-355 has biased composition (low complexity); sequence GPAGQRPGPTGQP. A helical membrane pass occupies residues 404–424; it reads LVAGAAAVVLVLVLGAIGIWI. Residues 425-626 are Extracellular-facing; the sequence is AIRPKPVQPP…AKIVDKVNKE (202 aa). 2 disulfides stabilise this stretch: C482–C545 and C587–C604.

Belongs to the protein kinase superfamily. Ser/Thr protein kinase family. A divalent metal cation serves as cofactor. In terms of processing, autophosphorylated on threonine and serine residues. Dephosphorylated by PstP.

It localises to the cell membrane. The enzyme catalyses L-seryl-[protein] + ATP = O-phospho-L-seryl-[protein] + ADP + H(+). The catalysed reaction is L-threonyl-[protein] + ATP = O-phospho-L-threonyl-[protein] + ADP + H(+). With respect to regulation, inhibited by the kinase inhibitors staurosporine and H-7. May regulate bacterial growth in response to external signals to facilitate adaptation to the host environment. In vitro, phosphorylates several substrates such as EmbR, DevR (DosR), DacB1 and Rv0681. This Mycobacterium tuberculosis (strain ATCC 25618 / H37Rv) protein is Serine/threonine-protein kinase PknH (pknH).